We begin with the raw amino-acid sequence, 100 residues long: Integration host factor subunit alpha (100 aa).

It belongs to the bacterial histone-like protein family. As to quaternary structure, heterodimer of an alpha and a beta chain.

This protein is one of the two subunits of integration host factor, a specific DNA-binding protein that functions in genetic recombination as well as in transcriptional and translational control. This chain is Integration host factor subunit alpha, found in Phenylobacterium zucineum (strain HLK1).